The chain runs to 670 residues: Solute carrier organic anion transporter family member 1A6 (670 aa).

The Cytoplasmic portion of the chain corresponds to 1 to 20 (MGEPEKRAGTHGIRCFAKIK). Residues 21 to 40 (VFLLALTWAYASKALSATYM) traverse the membrane as a helical segment. Residues 41–59 (NSMLTQIERRFNISTSIVG) are Extracellular-facing. N-linked (GlcNAc...) asparagine glycosylation occurs at asparagine 52. A helical transmembrane segment spans residues 60–80 (LINGSFEVGNLLLIIFVSYFG). Residues 81-86 (RKRHRP) lie on the Cytoplasmic side of the membrane. A helical membrane pass occupies residues 87 to 111 (IMIGIGCAVMGLGCFIISLPHFLMG). At 112-155 (RYEYETTISPTSNLSSNSFLCMENRTQTLKPTQDPAECVKEMKS) the chain is on the extracellular side. Residues asparagine 124 and asparagine 135 are each glycosylated (N-linked (GlcNAc...) asparagine). The chain crosses the membrane as a helical span at residues 156 to 184 (LMWIYVLVGNIIRGIGETPIMPLGISYIE). Residues 185–203 (DFAKSENSPFYIGILEVGK) are Cytoplasmic-facing. A helical transmembrane segment spans residues 204 to 224 (ITGPIAAIWLGSFCATIYVDM). The Extracellular segment spans residues 225-242 (GSVNTDDLTITPTDTRCV). A helical transmembrane segment spans residues 243–267 (GAWWIGFLVCAGLNILISIPFFFFP). Residues 268–311 (KTFPKEGPEDMANETKNDEGDKHREKAKEEKRGITKDFFLFMKS) are Cytoplasmic-facing. The segment at 276–295 (EDMANETKNDEGDKHREKAK) is disordered. A helical membrane pass occupies residues 312-333 (LSCNPIYMLCVLTSVLQVNGFV). Over 334-353 (SIFTFKPKYLEHHYGKSSSE) the chain is Extracellular. The helical transmembrane segment at 354–377 (AIFLMGLYTLPSVCVGYLISGFIM) threads the bilayer. Residues 378-381 (KKFK) are Cytoplasmic-facing. Residues 382 to 405 (ITLKKAAFISYCLGMSECLLSLCN) form a helical membrane-spanning segment. Residues 406–513 (FMLTCDNVPI…PDCANKLQYF (108 aa)) are Extracellular-facing. One can recognise a Kazal-like domain in the interval 433-488 (NTVLADCNTRCSCLTKTWDPVCGDNGLAYITPCLAGCEKSVGSGINMVLQDCSCIQ). Intrachain disulfides connect cysteine 439/cysteine 469, cysteine 445/cysteine 465, and cysteine 454/cysteine 486. N-linked (GlcNAc...) asparagine glycosylation occurs at asparagine 492. The chain crosses the membrane as a helical span at residues 514–536 (LIITVFCSFFYSLSLIPGYMIFL). Residues 537-545 (RCMKSEEKS) are Cytoplasmic-facing. The chain crosses the membrane as a helical span at residues 546-571 (LGIGLQAFCMRILGGILAPIYFGVLI). The Extracellular portion of the chain corresponds to 572-605 (DRTCLHWGTQKCGEPGACRTYEINSFRSIYLGLP). A helical membrane pass occupies residues 606–623 (AALRGSSYLPAFFILRLM). The Cytoplasmic segment spans residues 624 to 670 (RKFQFPGDINSPVTDHVEMMLTEKESEHTDVHRSPQVENDGELKTKL). Residue serine 634 is modified to Phosphoserine. A disordered region spans residues 647–670 (KESEHTDVHRSPQVENDGELKTKL).

It belongs to the organo anion transporter (TC 2.A.60) family.

The protein localises to the cell membrane. Functionally, may mediate the Na(+)-independent transport of organic anions. The sequence is that of Solute carrier organic anion transporter family member 1A6 (Slco1a6) from Rattus norvegicus (Rat).